Reading from the N-terminus, the 312-residue chain is Telomere-binding protein OPG077 (312 aa).

It belongs to the orthopoxvirus OPG077 family.

Its subcellular location is the virion. In terms of biological role, DNA-binding protein which binds to the hairpin form of the viral telomeric sequence. Required for the production of mature virions (MV). The chain is Telomere-binding protein OPG077 (OPG077) from Variola virus (isolate Human/India/Ind3/1967) (VARV).